Consider the following 218-residue polypeptide: N-(5'-phosphoribosyl)anthranilate isomerase (218 aa).

Belongs to the TrpF family.

It catalyses the reaction N-(5-phospho-beta-D-ribosyl)anthranilate = 1-(2-carboxyphenylamino)-1-deoxy-D-ribulose 5-phosphate. Its pathway is amino-acid biosynthesis; L-tryptophan biosynthesis; L-tryptophan from chorismate: step 3/5. The sequence is that of N-(5'-phosphoribosyl)anthranilate isomerase from Stenotrophomonas maltophilia (strain K279a).